The sequence spans 384 residues: Spermidine/putrescine import ATP-binding protein PotA (384 aa).

The ABC transporter domain occupies 6 to 238 (ITFNNVSKTF…PINHFVANFI (233 aa)). 40 to 47 (GASGSGKS) is a binding site for ATP.

This sequence belongs to the ABC transporter superfamily. Spermidine/putrescine importer (TC 3.A.1.11.1) family. The complex is composed of two ATP-binding proteins (PotA), two transmembrane proteins (PotB and PotC) and a solute-binding protein (PotD).

It localises to the cell membrane. It carries out the reaction ATP + H2O + polyamine-[polyamine-binding protein]Side 1 = ADP + phosphate + polyamineSide 2 + [polyamine-binding protein]Side 1.. Part of the ABC transporter complex PotABCD involved in spermidine/putrescine import. Responsible for energy coupling to the transport system. This is Spermidine/putrescine import ATP-binding protein PotA from Streptococcus pyogenes serotype M6 (strain ATCC BAA-946 / MGAS10394).